The following is a 297-amino-acid chain: Urease accessory protein UreD (297 aa).

The protein belongs to the UreD family. UreD, UreF and UreG form a complex that acts as a GTP-hydrolysis-dependent molecular chaperone, activating the urease apoprotein by helping to assemble the nickel containing metallocenter of UreC. The UreE protein probably delivers the nickel.

Its subcellular location is the cytoplasm. Functionally, required for maturation of urease via the functional incorporation of the urease nickel metallocenter. This chain is Urease accessory protein UreD, found in Anaeromyxobacter sp. (strain Fw109-5).